The following is a 176-amino-acid chain: Salivary antigen 1 (176 aa).

An N-terminal signal peptide occupies residues Met1 to Gly18.

The protein localises to the secreted. The polypeptide is Salivary antigen 1 (Ctenocephalides felis (Cat flea)).